The chain runs to 255 residues: Probable iron chelatin transport ATP-binding protein HP_0888 (255 aa).

The ABC transporter domain occupies 3–240 (LEVKNLSFKY…HNLSALYDTP (238 aa)). 35-42 (APNGSGKT) lines the ATP pocket.

It belongs to the ABC transporter superfamily.

It is found in the cell inner membrane. Its function is as follows. Part of a binding-protein-dependent transport system for an iron chelatin. Probably responsible for energy coupling to the transport system (Potential). The protein is Probable iron chelatin transport ATP-binding protein HP_0888 of Helicobacter pylori (strain ATCC 700392 / 26695) (Campylobacter pylori).